We begin with the raw amino-acid sequence, 25 residues long: Kappa-conotoxin RIIIJ (25 aa).

4-hydroxyproline occurs at positions 2, 3, 7, 8, 13, 15, and 21. Disulfide bonds link C4-C17, C5-C22, and C12-C23.

The protein belongs to the conotoxin M superfamily. As to expression, expressed by the venom duct.

It is found in the secreted. In terms of biological role, kappa-conotoxins inhibits voltage-gated potassium channels. This toxin dose-dependently and reversibly inhibits the Kv1.2/KCNA2 channel in mammalia. Does not exert protective effect on cardiac tissue when administered after an ischemic event. The sequence is that of Kappa-conotoxin RIIIJ from Conus radiatus (Rayed cone).